The primary structure comprises 881 residues: Putative leucine-rich repeat receptor-like protein kinase At2g19210 (881 aa).

An N-terminal signal peptide occupies residues 1–25 (MVHYNFLSLIIFACFFAVFVLLVRA). Residues 26 to 518 (QDQSGFVSID…SDEKTKKNVY (493 aa)) are Extracellular-facing. N-linked (GlcNAc...) asparagine glycosylation is found at N143, N234, N295, N310, N404, N419, N435, N446, and N462. LRR repeat units follow at residues 438–460 (LLHI…LGNL) and 462–483 (NLTE…KLLE). A helical membrane pass occupies residues 519–539 (IIPLVASVVGVLGLVLAIALF). At 540-881 (LLYKKRHRRG…FDSGMFPQAR (342 aa)) the chain is on the cytoplasmic side. Residues 576 to 850 (NNFERVLGQG…HVVAELKESV (275 aa)) form the Protein kinase domain. Residues 582-590 (LGQGGFGKV) and K603 contribute to the ATP site. At Y648 the chain carries Phosphotyrosine. D699 functions as the Proton acceptor in the catalytic mechanism. 2 positions are modified to phosphothreonine: T734 and T739. Position 747 is a phosphotyrosine (Y747). The interval 851–881 (SRARAGGGSGASSVTDPAMTNFDSGMFPQAR) is disordered.

Belongs to the protein kinase superfamily. Ser/Thr protein kinase family.

It localises to the cell membrane. The catalysed reaction is L-seryl-[protein] + ATP = O-phospho-L-seryl-[protein] + ADP + H(+). It catalyses the reaction L-threonyl-[protein] + ATP = O-phospho-L-threonyl-[protein] + ADP + H(+). This Arabidopsis thaliana (Mouse-ear cress) protein is Putative leucine-rich repeat receptor-like protein kinase At2g19210.